The sequence spans 196 residues: Inosine triphosphate pyrophosphatase 1 (196 aa).

20–25 (TGNDGK) is an ITP binding site. Glutamate 48 contributes to the Mg(2+) binding site. Residues lysine 61, 77 to 78 (DT), lysine 94, 153 to 156 (FGWD), lysine 177, and 182 to 183 (PR) each bind ITP.

It belongs to the HAM1 NTPase family. As to quaternary structure, homodimer. Requires Mg(2+) as cofactor. Mn(2+) is required as a cofactor.

The protein resides in the cytoplasm. It catalyses the reaction ITP + H2O = IMP + diphosphate + H(+). The enzyme catalyses dITP + H2O = dIMP + diphosphate + H(+). The catalysed reaction is XTP + H2O = XMP + diphosphate + H(+). Its function is as follows. Pyrophosphatase that hydrolyzes non-canonical purine nucleotides such as inosine triphosphate (ITP), deoxyinosine triphosphate (dITP) or xanthosine 5'-triphosphate (XTP) to their respective monophosphate derivatives. The enzyme does not distinguish between the deoxy- and ribose forms. Probably excludes non-canonical purines from RNA and DNA precursor pools, thus preventing their incorporation into RNA and DNA and avoiding chromosomal lesions. In Trypanosoma cruzi (strain CL Brener), this protein is Inosine triphosphate pyrophosphatase 1.